We begin with the raw amino-acid sequence, 424 residues long: MSVKWEKQEGNEGVLTVEVDAETFKTALDDAFKKVVKQVSIPGFRKGKIPRGLFEQRFGVEALYQDALDILLPVEYPKAVEEAGIEPVDRPEIDVEKIEKGESLIFTAKVTVKPEVKLGEYKGLGIEKDDTTVTDEDVQNELKALQERQAELVVKEEGAVEEGNTVVLDFEGFVDGEAFEGGKAENYSLEVGSGSFIPGFEDQLVGLEAGAEKDVEVTFPEEYHAEDLAGKPAVFKVKIHEIKAKELPELDDEFAKDIDEEVETLAELTEKTKKRLEEAKENEADAKLREELVLKASENAEIDVPQAMVDTELDRMLKEFEQRLQMQGMNLELYTQFSGQDEAALKEQMKEDAEKRVKSNLTLEAIAKAENLEVSDEEVDAELTKMAEAYNMPVENIKQAIGSTDAMKEDLKVRKAIDFLVENR.

The PPIase FKBP-type domain maps to 163-248; it reads GNTVVLDFEG…IHEIKAKELP (86 aa).

Belongs to the FKBP-type PPIase family. Tig subfamily.

It is found in the cytoplasm. It catalyses the reaction [protein]-peptidylproline (omega=180) = [protein]-peptidylproline (omega=0). Its function is as follows. Involved in protein export. Acts as a chaperone by maintaining the newly synthesized protein in an open conformation. Functions as a peptidyl-prolyl cis-trans isomerase. The protein is Trigger factor (tig) of Bacillus subtilis (strain 168).